We begin with the raw amino-acid sequence, 2124 residues long: AMB antimetabolite synthetase AmbE (2124 aa).

The adenylation stretch occupies residues 456 to 847 (LRAALQPQAP…LGRIDEQVKI (392 aa)). Residues 950–1147 (DVGANIGLFS…DLLRRHGFEV (198 aa)) are methyltransferase. Residues 1251-1325 (APANATEAAL…ELARLLAAPA (75 aa)) form the Carrier 1 domain. Ser1286 carries the O-(pantetheine 4'-phosphoryl)serine modification. Positions 1359-1780 (DAYPMTSLQQ…ALLGDPVQPP (422 aa)) are condensation. Residues 1785–1859 (AEDSVELRRV…EVVRRCHAAD (75 aa)) enclose the Carrier 2 domain. O-(pantetheine 4'-phosphoryl)serine is present on Ser1819. The interval 1886–2107 (RLIALPPAGG…AAEEVCAILR (222 aa)) is thioesterase.

It belongs to the NRP synthetase family. Pantetheine 4'-phosphate serves as cofactor.

The enzyme catalyses holo-[peptidyl-carrier protein] + L-glutamate + ATP = L-glutamyl-[peptidyl-carrier protein] + AMP + diphosphate. Involved in the biosynthesis of the antimetabolite L-2-amino-4-methoxy-trans-3-butenoic acid (AMB), a non-proteinogenic amino acid which is toxic for prokaryotes and eukaryotes. Adenylates L-glutamate and loads it onto its first peptidyl carrier domain via a thioester linkage to the phosphopanthetheine moiety. The second peptidyl carrier domain is loaded with a L-alanine activated by AmbB. After formation by AmbB of the L-Glu-L-Ala dipeptide at the first carrier domain of AmbE, the condensation domain of AmbE probably condenses this dipeptide with the L-Ala residue attached at the second carrier domain of AmbE to give the L-Ala-L-Glu-L-Ala tripeptide. The central amino acid, L-Glu, would then undergo a series of modifications to be converted into AMB while the two flanking L-Ala residues remain in place. Finally, the L-Ala-AMB-L-Ala tripeptide is probably released by thioester cleavage via the thioester domain of AmbE. The polypeptide is AMB antimetabolite synthetase AmbE (Pseudomonas aeruginosa (strain ATCC 15692 / DSM 22644 / CIP 104116 / JCM 14847 / LMG 12228 / 1C / PRS 101 / PAO1)).